A 214-amino-acid polypeptide reads, in one-letter code: Nascent polypeptide-associated complex subunit alpha (214 aa).

Disordered regions lie at residues 1-57 and 119-179; these read MSNP…NEKK and ASAA…EDKD. Positions 22–38 are enriched in acidic residues; that stretch reads AEDEGSDSSDSEGEGEV. One can recognise an NAC-A/B domain in the interval 52–117; sequence SRNEKKARKS…AKIEDLNSQA (66 aa). Residues 119-128 are compositionally biased toward low complexity; that stretch reads ASAAAQLAAQ. Over residues 129 to 159 the composition is skewed to basic and acidic residues; the sequence is ESHDHAGHDHSGHDHSHDHGKGKAVDTGDEK. The segment covering 160 to 171 has biased composition (acidic residues); that stretch reads KEEEEDDTEEVD. Residues 175–214 form the UBA domain; that stretch reads LEDKDIELVMTQASVSRNKAVKALKENDNDIVNSIMALSI.

This sequence belongs to the NAC-alpha family. Part of the nascent polypeptide-associated complex (NAC), consisting of EGD2 and EGD1. NAC associates with ribosomes via EGD1.

It is found in the cytoplasm. The protein localises to the nucleus. Functionally, component of the nascent polypeptide-associated complex (NAC), a dynamic component of the ribosomal exit tunnel, protecting the emerging polypeptides from interaction with other cytoplasmic proteins to ensure appropriate nascent protein targeting. The NAC complex also promotes mitochondrial protein import by enhancing productive ribosome interactions with the outer mitochondrial membrane and blocks the inappropriate interaction of ribosomes translating non-secretory nascent polypeptides with translocation sites in the membrane of the endoplasmic reticulum. EGD2 may also be involved in transcription regulation. This is Nascent polypeptide-associated complex subunit alpha (egd2) from Sclerotinia sclerotiorum (strain ATCC 18683 / 1980 / Ss-1) (White mold).